The sequence spans 229 residues: Urease accessory protein UreF (229 aa).

Belongs to the UreF family. As to quaternary structure, ureD, UreF and UreG form a complex that acts as a GTP-hydrolysis-dependent molecular chaperone, activating the urease apoprotein by helping to assemble the nickel containing metallocenter of UreC. The UreE protein probably delivers the nickel.

The protein resides in the cytoplasm. In terms of biological role, required for maturation of urease via the functional incorporation of the urease nickel metallocenter. The protein is Urease accessory protein UreF of Ralstonia pickettii (strain 12J).